We begin with the raw amino-acid sequence, 438 residues long: 3-phosphoshikimate 1-carboxyvinyltransferase (438 aa).

Lys-21 lines the phosphoenolpyruvate pocket. Residues Ser-22 and Arg-26 each coordinate 3-phosphoshikimate. The phosphoenolpyruvate stretch occupies residues 93–96 (NSGT). Phosphoenolpyruvate contacts are provided by Gly-95, Thr-96, and Arg-123. The 3-phosphoshikimate site is built by Ser-167, Ala-168, Gln-169, Asp-315, and Lys-342. Gln-169 provides a ligand contact to phosphoenolpyruvate. The Proton acceptor role is filled by Asp-315. 2 residues coordinate phosphoenolpyruvate: Arg-346 and Arg-387.

The protein belongs to the EPSP synthase family. In terms of assembly, homodimer or homotetramer.

It localises to the cytoplasm. The catalysed reaction is 3-phosphoshikimate + phosphoenolpyruvate = 5-O-(1-carboxyvinyl)-3-phosphoshikimate + phosphate. It participates in metabolic intermediate biosynthesis; chorismate biosynthesis; chorismate from D-erythrose 4-phosphate and phosphoenolpyruvate: step 6/7. Its function is as follows. Catalyzes the transfer of the enolpyruvyl moiety of phosphoenolpyruvate (PEP) to the 5-hydroxyl of shikimate-3-phosphate (S3P) to produce enolpyruvyl shikimate-3-phosphate and inorganic phosphate. The sequence is that of 3-phosphoshikimate 1-carboxyvinyltransferase from Coxiella burnetii (strain RSA 493 / Nine Mile phase I).